The chain runs to 934 residues: Palmitoyltransferase ZDHHC8 (934 aa).

The Cytoplasmic portion of the chain corresponds to 1–9 (MPKCDVKTR). Residues 10-30 (YIPATFAWIVLLLTTFLFFFY) form a helical membrane-spanning segment. Topologically, residues 31–47 (PCQFYVKSHPWVLAYQG) are extracellular. Residues 48–68 (VITFFVLANFTLATFMDPGII) form a helical membrane-spanning segment. At 69 to 142 (PKASPDEDCE…NNCIGRRNYR (74 aa)) the chain is on the cytoplasmic side. The DHHC domain occupies 99–149 (KWCVTCKFYRPPRCSHCSVCNHCIETFDHHCPWVNNCIGRRNYRFFFFFLV). Cys-129 (S-palmitoyl cysteine intermediate) is an active-site residue. The chain crosses the membrane as a helical span at residues 143-163 (FFFFFLVSLSIHMLSIFSLCL). Residues 164-177 (VYVLKIMPNIKDTA) lie on the Extracellular side of the membrane. A helical transmembrane segment spans residues 178–198 (PIVAIILMGLVTILAIPIFGL). Over 199–934 (TGFHMVLVSR…IYDMNYEISV (736 aa)) the chain is Cytoplasmic. 6 disordered regions span residues 336–440 (NGYN…GYTS), 506–525 (MASPVRRSNPGTPTQPRRPD), 669–705 (QRGVYMWKDTSPGFTNNAGQQQQQQQQAQQVVSSGIG), 751–780 (QQQQQQQQAAAAAAASYHRSNPTSPTTMPQ), 835–862 (PNPMGNQGGGNLQTQPSPQIKRKQTPTR), and 881–934 (LEQQ…EISV). Composition is skewed to polar residues over residues 337–349 (GYNQRSGSTTLYS) and 381–394 (RHNSSSFYLPQVSD). A compositionally biased stretch (gly residues) spans 397–411 (GLNGSVSTGGGGGGD). Basic residues predominate over residues 415-429 (HMRLYHPRHSPHARP). Composition is skewed to low complexity over residues 688–705 (QQQQQQQQAQQVVSSGIG) and 751–765 (QQQQQQQQAAAAAAA). Over residues 768 to 780 (HRSNPTSPTTMPQ) the composition is skewed to polar residues. Residues 910–919 (MQSNASNSGT) show a composition bias toward polar residues.

The protein belongs to the DHHC palmitoyltransferase family. ERF2/ZDHHC9 subfamily.

It is found in the golgi apparatus membrane. Its subcellular location is the cell membrane. The catalysed reaction is L-cysteinyl-[protein] + hexadecanoyl-CoA = S-hexadecanoyl-L-cysteinyl-[protein] + CoA. In terms of biological role, palmitoyltransferase that catalyzes the addition of palmitate onto various protein substrates and therefore functions in several unrelated biological processes. Regulates tissue growth possibly by regulating Ras64B protein stability. May regulate CG34450 mRNA levels. The sequence is that of Palmitoyltransferase ZDHHC8 from Drosophila melanogaster (Fruit fly).